The following is a 631-amino-acid chain: Phosphomethylpyrimidine synthase (631 aa).

Residues N239, M268, Y297, H333, S353 to G355, D394 to R397, and E433 each bind substrate. H437 contacts Zn(2+). Y460 is a substrate binding site. H501 contributes to the Zn(2+) binding site. Residues C581, C584, and C589 each coordinate [4Fe-4S] cluster.

This sequence belongs to the ThiC family. In terms of assembly, homodimer. The cofactor is [4Fe-4S] cluster.

The enzyme catalyses 5-amino-1-(5-phospho-beta-D-ribosyl)imidazole + S-adenosyl-L-methionine = 4-amino-2-methyl-5-(phosphooxymethyl)pyrimidine + CO + 5'-deoxyadenosine + formate + L-methionine + 3 H(+). It functions in the pathway cofactor biosynthesis; thiamine diphosphate biosynthesis. Functionally, catalyzes the synthesis of the hydroxymethylpyrimidine phosphate (HMP-P) moiety of thiamine from aminoimidazole ribotide (AIR) in a radical S-adenosyl-L-methionine (SAM)-dependent reaction. This is Phosphomethylpyrimidine synthase from Escherichia coli (strain SMS-3-5 / SECEC).